The sequence spans 215 residues: Octanoyltransferase (215 aa).

One can recognise a BPL/LPL catalytic domain in the interval 31-206 (PDSQDEIWLV…QLVKHLDYAE (176 aa)). Residues 70-77 (RGGQVTYH), 137-139 (SLG), and 150-152 (GLA) each bind substrate. Catalysis depends on C168, which acts as the Acyl-thioester intermediate.

This sequence belongs to the LipB family.

The protein resides in the cytoplasm. The enzyme catalyses octanoyl-[ACP] + L-lysyl-[protein] = N(6)-octanoyl-L-lysyl-[protein] + holo-[ACP] + H(+). It functions in the pathway protein modification; protein lipoylation via endogenous pathway; protein N(6)-(lipoyl)lysine from octanoyl-[acyl-carrier-protein]: step 1/2. Catalyzes the transfer of endogenously produced octanoic acid from octanoyl-acyl-carrier-protein onto the lipoyl domains of lipoate-dependent enzymes. Lipoyl-ACP can also act as a substrate although octanoyl-ACP is likely to be the physiological substrate. The chain is Octanoyltransferase from Pseudomonas putida (strain GB-1).